The following is a 712-amino-acid chain: MGIKGDKKATSDQARLARLTLEGNSGNEEDIQFMIKTIIETTGCTQAQAEIALLDTDNNLYGAIDHILDAGDKLDSWTEQKGAKKEKKKPEEGSYNNRGFVARGRGGGTGFVDRGGRGRSNGAPRESRDNNRDNRDNKEGAAPRSTRGGFEKPYVGRGGRGGARGGYSRAVAPSSALEPDAFTADLDENQTKVDTTVTEVQPPVEESVTATVPTSSAPAPISFAAVAAAAHRKEALRKHQAQNPQPAAPPRRSLSPQPPLPSVAPVKEEPAAAPVFFEPETSHQPEKEDGFFQNESSVLAEEQTPNVSTHHDENVQSTPEPNQAWTTQLKTDLGIGLSEAPGLGLSPIPSAAPVQIIPDPGVEFVGTTAPTNIHDYSFGFVEAAPSPQLPSTESSAASISNASENIFNSSRIMPKQVEPERTSIPNGDYNLKSTSPPLSYGQSNRGLSYDTSSASYQPTDRMAPNKFNNSGPLPTQQSAQQHQPQQQQQQAPQQPVQQQQQTPPAQSQPTGHPQQHPHMMFTQQLPYAPYMNNYMNMYNPMPGVRDEQYTAALMQYGMGVDLTSLLPTAPLSQAASAQQVQSGQQRETHGLMDFNKFGSQSSRDQQPQQASNVGPPPGFQATNYMQQPNLSSLFMQQYSPAPHQFTPFMNMMPNVGSSAGGRQLYGQDDERKSYDKMSGSKPAAQQNQHSQYQHNGGNLGKYGMNKPYNWSN.

Basic and acidic residues-rich tracts occupy residues 79-92 (EQKG…KPEE) and 125-141 (RESR…KEGA). 6 disordered regions span residues 79–172 (EQKG…RAVA), 198–217 (TEVQ…TSSA), 228–265 (AAAH…SVAP), 410–517 (SRIM…QQHP), 594–624 (FNKF…ATNY), and 659–712 (AGGR…NWSN). The span at 156-165 (GRGGRGGARG) shows a compositional bias: gly residues. A compositionally biased stretch (low complexity) spans 241–255 (AQNPQPAAPPRRSLS). Positions 431-458 (LKSTSPPLSYGQSNRGLSYDTSSASYQP) are enriched in polar residues. Residues 474-510 (PTQQSAQQHQPQQQQQQAPQQPVQQQQQTPPAQSQPT) show a composition bias toward low complexity. Polar residues-rich tracts occupy residues 597-612 (FGSQ…QASN) and 683-696 (AAQQ…QHNG).

The protein belongs to the Ubiquitin-associated-like family.

It localises to the cytoplasm. Its subcellular location is the stress granule. Antagonises the activities of multiple heterochronic microRNAs such as lin-4 and let-7 miRNAs. Modulates gene expression and cell fate specification during development. Plays a role in, but not strictly required for, the formation of stress granules. May be involved in protein translation and reducing the expression of mature microRNAs. The sequence is that of Prion-like (glutamine/asparagine-rich) domain bearing protein pqn-59 from Caenorhabditis elegans.